We begin with the raw amino-acid sequence, 482 residues long: GTPase Der (482 aa).

2 consecutive EngA-type G domains span residues 3–166 (PVVA…SEQF) and 195–368 (IKLA…NSAT). Residues 9-16 (GRPNVGKS), 56-60 (DTGGI), 118-121 (NKVD), 201-208 (GKPNVGKS), 248-252 (DTAGV), and 313-316 (NKWD) each bind GTP. The KH-like domain maps to 369–453 (KRINTSMLTR…PIKVEFREGA (85 aa)).

This sequence belongs to the TRAFAC class TrmE-Era-EngA-EngB-Septin-like GTPase superfamily. EngA (Der) GTPase family. Associates with the 50S ribosomal subunit.

Functionally, GTPase that plays an essential role in the late steps of ribosome biogenesis. This Pseudoalteromonas atlantica (strain T6c / ATCC BAA-1087) protein is GTPase Der.